A 466-amino-acid polypeptide reads, in one-letter code: Probable Xaa-Pro aminopeptidase pepP (466 aa).

D264, D275, E398, and E438 together coordinate Mn(2+).

Belongs to the peptidase M24B family. It depends on Mn(2+) as a cofactor.

The catalysed reaction is Release of any N-terminal amino acid, including proline, that is linked to proline, even from a dipeptide or tripeptide.. Its function is as follows. Catalyzes the removal of a penultimate prolyl residue from the N-termini of peptides. This chain is Probable Xaa-Pro aminopeptidase pepP (pepP), found in Aspergillus niger (strain ATCC MYA-4892 / CBS 513.88 / FGSC A1513).